A 93-amino-acid polypeptide reads, in one-letter code: Small ribosomal subunit protein uS15 (93 aa).

This sequence belongs to the universal ribosomal protein uS15 family. Part of the 30S ribosomal subunit. Forms a bridge to the 50S subunit in the 70S ribosome, contacting the 23S rRNA.

Functionally, one of the primary rRNA binding proteins, it binds directly to 16S rRNA where it helps nucleate assembly of the platform of the 30S subunit by binding and bridging several RNA helices of the 16S rRNA. Its function is as follows. Forms an intersubunit bridge (bridge B4) with the 23S rRNA of the 50S subunit in the ribosome. The polypeptide is Small ribosomal subunit protein uS15 (Ehrlichia chaffeensis (strain ATCC CRL-10679 / Arkansas)).